The following is a 140-amino-acid chain: MSIMQVEVVSSEQKIYSGEATFIVVPTVQGELGIYPRHEPIMSLVRLGALRLTVLGEDKEVLVAVSGGVLEVQPDKVTVLADVAVRSAEMDQARAEEAKKAAEAGISQAKDDKALAEAHKALAAAIAQLKTLDYIRSHKK.

This sequence belongs to the ATPase epsilon chain family. F-type ATPases have 2 components, CF(1) - the catalytic core - and CF(0) - the membrane proton channel. CF(1) has five subunits: alpha(3), beta(3), gamma(1), delta(1), epsilon(1). CF(0) has three main subunits: a, b and c.

It is found in the cell inner membrane. In terms of biological role, produces ATP from ADP in the presence of a proton gradient across the membrane. The chain is ATP synthase epsilon chain from Neisseria meningitidis serogroup A / serotype 4A (strain DSM 15465 / Z2491).